The sequence spans 100 residues: MELTPREKDKLLLFTAALLAERRLARGLRLNYPEAVALISAAVLEGARDGRTVAELMSLGREVLVREQVMDGVPEMLHDVQVEATFPDGTKLVTVHDPIV.

The protein belongs to the urease gamma subunit family. Heterotrimer of UreA (gamma), UreB (beta) and UreC (alpha) subunits. Three heterotrimers associate to form the active enzyme.

Its subcellular location is the cytoplasm. The catalysed reaction is urea + 2 H2O + H(+) = hydrogencarbonate + 2 NH4(+). The protein operates within nitrogen metabolism; urea degradation; CO(2) and NH(3) from urea (urease route): step 1/1. The protein is Urease subunit gamma of Pseudomonas entomophila (strain L48).